We begin with the raw amino-acid sequence, 406 residues long: Biofilm regulatory protein A (406 aa).

Residues 1 to 26 form the signal peptide; it reads MKIGKKILIMLVTIFLTSLVALGVYA. Residues 347–397 show a composition bias toward low complexity; the sequence is SSSASDYSSSGNYSGSSSDYGSSSSYGSNSSSGSSSDYSGQNSYNQGNYQQ. A disordered region spans residues 347–406; that stretch reads SSSASDYSSSGNYSGSSSDYGSSSSYGSNSSSGSSSDYSGQNSYNQGNYQQPAAGTGIGN.

It belongs to the LytR/CpsA/Psr (LCP) family.

It localises to the cell envelope. Functionally, involved in biofilm formation, cell division, autolysis and the regulation of acid and oxidative stress tolerance. May be associated with systemic virulence in blood. The polypeptide is Biofilm regulatory protein A (brpA) (Streptococcus mutans serotype c (strain ATCC 700610 / UA159)).